Reading from the N-terminus, the 288-residue chain is Phosphatidylserine decarboxylase proenzyme (288 aa).

Residues aspartate 95, histidine 152, and serine 255 each act as charge relay system; for autoendoproteolytic cleavage activity in the active site. Serine 255 functions as the Schiff-base intermediate with substrate; via pyruvic acid; for decarboxylase activity in the catalytic mechanism. Serine 255 is modified (pyruvic acid (Ser); by autocatalysis).

This sequence belongs to the phosphatidylserine decarboxylase family. PSD-B subfamily. Prokaryotic type I sub-subfamily. As to quaternary structure, heterodimer of a large membrane-associated beta subunit and a small pyruvoyl-containing alpha subunit. Pyruvate is required as a cofactor. Post-translationally, is synthesized initially as an inactive proenzyme. Formation of the active enzyme involves a self-maturation process in which the active site pyruvoyl group is generated from an internal serine residue via an autocatalytic post-translational modification. Two non-identical subunits are generated from the proenzyme in this reaction, and the pyruvate is formed at the N-terminus of the alpha chain, which is derived from the carboxyl end of the proenzyme. The autoendoproteolytic cleavage occurs by a canonical serine protease mechanism, in which the side chain hydroxyl group of the serine supplies its oxygen atom to form the C-terminus of the beta chain, while the remainder of the serine residue undergoes an oxidative deamination to produce ammonia and the pyruvoyl prosthetic group on the alpha chain. During this reaction, the Ser that is part of the protease active site of the proenzyme becomes the pyruvoyl prosthetic group, which constitutes an essential element of the active site of the mature decarboxylase.

It localises to the cell membrane. The enzyme catalyses a 1,2-diacyl-sn-glycero-3-phospho-L-serine + H(+) = a 1,2-diacyl-sn-glycero-3-phosphoethanolamine + CO2. The protein operates within phospholipid metabolism; phosphatidylethanolamine biosynthesis; phosphatidylethanolamine from CDP-diacylglycerol: step 2/2. Its function is as follows. Catalyzes the formation of phosphatidylethanolamine (PtdEtn) from phosphatidylserine (PtdSer). The chain is Phosphatidylserine decarboxylase proenzyme from Methylococcus capsulatus (strain ATCC 33009 / NCIMB 11132 / Bath).